Consider the following 289-residue polypeptide: Leucine--tRNA ligase subunit beta (289 aa).

Residues 45-49 (KMSKS) carry the 'KMSKS' region motif. Residue Lys48 coordinates ATP.

This sequence belongs to the class-I aminoacyl-tRNA synthetase family. In terms of assembly, seems to consist of an alpha chain and a beta chain.

It is found in the cytoplasm. The enzyme catalyses tRNA(Leu) + L-leucine + ATP = L-leucyl-tRNA(Leu) + AMP + diphosphate. This chain is Leucine--tRNA ligase subunit beta (leuS'), found in Aquifex aeolicus (strain VF5).